Consider the following 788-residue polypeptide: Serine/threonine-protein kinase MARK2 (788 aa).

The segment at 1–46 is disordered; the sequence is MSSARTPLPTLNERDTEQPTLGHLDSKPSSKSNMIRGRNSATSADE. The span at 27-45 shows a compositional bias: polar residues; the sequence is KPSSKSNMIRGRNSATSAD. Ser40 carries the phosphoserine modification. Residues 53–304 enclose the Protein kinase domain; it reads YRLLKTIGKG…LEQIMKDRWM (252 aa). Thr58 carries the post-translational modification Phosphothreonine; by autocatalysis. Residues 59 to 67 and Lys82 each bind ATP; that span reads IGKGNFAKV. 3 positions are modified to phosphoserine; by CaMK1: Ser91, Ser92, and Ser93. Asp175 (proton acceptor) is an active-site residue. Residue Thr208 is modified to Phosphothreonine; by LKB1 and TAOK1. Residue Ser212 is modified to Phosphoserine; by GSK3-beta. Ser274 is subject to Phosphoserine; by autocatalysis. Residue Thr275 is modified to Phosphothreonine; by autocatalysis. Thr294 is subject to Phosphothreonine; by CaMK1. A UBA domain is found at 323-362; the sequence is YKDPRRTELMVSMGYTREEIQDSLVGQRYNEVMATYLLLG. The disordered stretch occupies residues 373–632; it reads ITLKPRPSAD…HSQGRRGASG (260 aa). A phosphoserine mark is found at Lys376 and Ser409. The segment covering 418-432 has biased composition (polar residues); that stretch reads PTSNSYSKKTQSNNA. Residues 433–445 show a composition bias toward basic and acidic residues; it reads ENKRPEEDRESGR. Position 456 is a phosphoserine (Ser456). Thr467 is subject to Phosphothreonine. Residues 467–486 show a composition bias toward polar residues; sequence TPTPSTNSVLSTSTNRSRNS. Ser486 and Ser493 each carry phosphoserine. Residues 495 to 504 are compositionally biased toward polar residues; it reads GQASIQNGKD. Positions 511–525 are enriched in low complexity; sequence SRASTASASAAVSAA. Residues Ser569, Ser571, and Ser592 each carry the phosphoserine modification. Residue Thr596 is modified to Phosphothreonine; by PKC/PRKCZ. 2 positions are modified to phosphoserine: Ser619 and Ser722. Residues 739–788 enclose the KA1 domain; sequence TPGHEDFVQWEMEVCKLPRLSLNGVRFKRISGTSMAFKNIASKIANELKL.

Belongs to the protein kinase superfamily. CAMK Ser/Thr protein kinase family. SNF1 subfamily. Homodimer. Interacts with PAK5; leading to inhibit the protein kinase activity. Interacts with MAPT/TAU. Interacts with MTCL1 isoform 1; the interaction is direct and increases MARK2 microtubule-binding ability. Interacts (when phosphorylated at Thr-596) with YWHAZ. Interacts with YWHAB, YWHAG and YWHAQ. As to quaternary structure, (Microbial infection) In case of infection, interacts with H.pylori CagA, leading to inhibit kinase activity and junctional and polarity defects. Mg(2+) is required as a cofactor. Post-translationally, autophosphorylated. Phosphorylated at Thr-208 by STK11/LKB1 in complex with STE20-related adapter-alpha (STRADA) pseudo kinase and CAB39. Phosphorylation at Thr-208 by TAOK1 activates the kinase activity, leading to phosphorylation and detachment of MAPT/TAU from microtubules. Phosphorylation at Ser-212 by GSK3-beta (GSK3B) inhibits the kinase activity. Phosphorylation by CaMK1 promotes activity and is required to promote neurite outgrowth. Phosphorylation at Thr-596 by PRKCZ/aPKC in polarized epithelial cells inhibits the kinase activity and promotes binding to 14-3-3 protein YWHAZ, leading to relocation from cell membrane to cytoplasm. As to expression, high levels of expression in heart, brain, skeletal muscle and pancreas, lower levels observed in lung, liver and kidney.

The protein resides in the cell membrane. It is found in the cytoplasm. The protein localises to the lateral cell membrane. It localises to the cytoskeleton. Its subcellular location is the cell projection. The protein resides in the dendrite. It catalyses the reaction L-seryl-[protein] + ATP = O-phospho-L-seryl-[protein] + ADP + H(+). The enzyme catalyses L-threonyl-[protein] + ATP = O-phospho-L-threonyl-[protein] + ADP + H(+). It carries out the reaction L-seryl-[tau protein] + ATP = O-phospho-L-seryl-[tau protein] + ADP + H(+). The catalysed reaction is L-threonyl-[tau protein] + ATP = O-phospho-L-threonyl-[tau protein] + ADP + H(+). Its activity is regulated as follows. Inhibited by PAK5; inhibition is independent of the kinase activity of PAK5. Activated by phosphorylation on Thr-208. Inhibited by phosphorylation at Ser-212 and Thr-596. Inhibited by hymenialdisine. Specifically inhibited by the H.pylori CagA peptide FPLKRHDKVDDLSK that mimics host substrates and binds to the kinase substrate-binding site. Its function is as follows. Serine/threonine-protein kinase. Involved in cell polarity and microtubule dynamics regulation. Phosphorylates CRTC2/TORC2, DCX, HDAC7, KIF13B, MAP2, MAP4 and RAB11FIP2. Phosphorylates the microtubule-associated protein MAPT/TAU. Plays a key role in cell polarity by phosphorylating the microtubule-associated proteins MAP2, MAP4 and MAPT/TAU at KXGS motifs, causing detachment from microtubules, and their disassembly. Regulates epithelial cell polarity by phosphorylating RAB11FIP2. Involved in the regulation of neuronal migration through its dual activities in regulating cellular polarity and microtubule dynamics, possibly by phosphorylating and regulating DCX. Regulates axogenesis by phosphorylating KIF13B, promoting interaction between KIF13B and 14-3-3 and inhibiting microtubule-dependent accumulation of KIF13B. Also required for neurite outgrowth and establishment of neuronal polarity. Regulates localization and activity of some histone deacetylases by mediating phosphorylation of HDAC7, promoting subsequent interaction between HDAC7 and 14-3-3 and export from the nucleus. Also acts as a positive regulator of the Wnt signaling pathway, probably by mediating phosphorylation of dishevelled proteins (DVL1, DVL2 and/or DVL3). Modulates the developmental decision to build a columnar versus a hepatic epithelial cell apparently by promoting a switch from a direct to a transcytotic mode of apical protein delivery. Essential for the asymmetric development of membrane domains of polarized epithelial cells. The protein is Serine/threonine-protein kinase MARK2 of Homo sapiens (Human).